Consider the following 228-residue polypeptide: Cytochrome c oxidase subunit 2 (228 aa).

At 1 to 26 the chain is on the mitochondrial intermembrane side; sequence MATWNNLNLQNGASPLMEQIIFFHDH. Residues 27-48 form a helical membrane-spanning segment; it reads TLIILIMITILVGYLMINLFFN. At 49 to 62 the chain is on the mitochondrial matrix side; it reads KYINRFLLEGQMIE. The helical transmembrane segment at 63-82 threads the bilayer; it reads LIWTILPAITLIFIALPSLR. The Mitochondrial intermembrane portion of the chain corresponds to 83-228; sequence LLYLLDELNN…FIKWINNYSS (146 aa). Residues histidine 161, cysteine 196, glutamate 198, cysteine 200, histidine 204, and methionine 207 each contribute to the Cu cation site. Glutamate 198 is a Mg(2+) binding site.

It belongs to the cytochrome c oxidase subunit 2 family. As to quaternary structure, component of the cytochrome c oxidase (complex IV, CIV), a multisubunit enzyme composed of a catalytic core of 3 subunits and several supernumerary subunits. The complex exists as a monomer or a dimer and forms supercomplexes (SCs) in the inner mitochondrial membrane with ubiquinol-cytochrome c oxidoreductase (cytochrome b-c1 complex, complex III, CIII). It depends on Cu cation as a cofactor.

It is found in the mitochondrion inner membrane. The enzyme catalyses 4 Fe(II)-[cytochrome c] + O2 + 8 H(+)(in) = 4 Fe(III)-[cytochrome c] + 2 H2O + 4 H(+)(out). Functionally, component of the cytochrome c oxidase, the last enzyme in the mitochondrial electron transport chain which drives oxidative phosphorylation. The respiratory chain contains 3 multisubunit complexes succinate dehydrogenase (complex II, CII), ubiquinol-cytochrome c oxidoreductase (cytochrome b-c1 complex, complex III, CIII) and cytochrome c oxidase (complex IV, CIV), that cooperate to transfer electrons derived from NADH and succinate to molecular oxygen, creating an electrochemical gradient over the inner membrane that drives transmembrane transport and the ATP synthase. Cytochrome c oxidase is the component of the respiratory chain that catalyzes the reduction of oxygen to water. Electrons originating from reduced cytochrome c in the intermembrane space (IMS) are transferred via the dinuclear copper A center (CU(A)) of subunit 2 and heme A of subunit 1 to the active site in subunit 1, a binuclear center (BNC) formed by heme A3 and copper B (CU(B)). The BNC reduces molecular oxygen to 2 water molecules using 4 electrons from cytochrome c in the IMS and 4 protons from the mitochondrial matrix. The sequence is that of Cytochrome c oxidase subunit 2 (COII) from Yponomeuta malinellus (European small ermine moth).